Consider the following 473-residue polypeptide: Trehalose-6-phosphate synthase (473 aa).

R10 provides a ligand contact to D-glucose 6-phosphate. G21–G22 contacts UDP-alpha-D-glucose. Positions 76 and 130 each coordinate D-glucose 6-phosphate. R262 and K267 together coordinate UDP-alpha-D-glucose. R300 lines the D-glucose 6-phosphate pocket. UDP-alpha-D-glucose contacts are provided by residues F339 and L365–E369. The interval T454 to A473 is disordered.

This sequence belongs to the glycosyltransferase 20 family. In terms of assembly, homotetramer.

It carries out the reaction D-glucose 6-phosphate + UDP-alpha-D-glucose = alpha,alpha-trehalose 6-phosphate + UDP + H(+). Its pathway is glycan biosynthesis; trehalose biosynthesis. Probably involved in the osmoprotection via the biosynthesis of trehalose. Catalyzes the transfer of glucose from UDP-alpha-D-glucose (UDP-Glc) to D-glucose 6-phosphate (Glc-6-P) to form trehalose-6-phosphate. Acts with retention of the anomeric configuration of the UDP-sugar donor. This Salmonella paratyphi A (strain ATCC 9150 / SARB42) protein is Trehalose-6-phosphate synthase.